We begin with the raw amino-acid sequence, 304 residues long: Lipoprotein signal peptidase (304 aa).

The next 3 helical transmembrane spans lie at 28–48 (IKIK…IVFV), 86–106 (PAVP…TFIF), and 112–132 (LIVL…DRSV). Active-site residues include D148 and D163. A helical membrane pass occupies residues 163–183 (DICIVTGFALIFLTFVVDIFL).

This sequence belongs to the peptidase A8 family.

The protein resides in the cell membrane. The catalysed reaction is Release of signal peptides from bacterial membrane prolipoproteins. Hydrolyzes -Xaa-Yaa-Zaa-|-(S,diacylglyceryl)Cys-, in which Xaa is hydrophobic (preferably Leu), and Yaa (Ala or Ser) and Zaa (Gly or Ala) have small, neutral side chains.. The protein operates within protein modification; lipoprotein biosynthesis (signal peptide cleavage). Functionally, this protein specifically catalyzes the removal of signal peptides from prolipoproteins. The chain is Lipoprotein signal peptidase from Mycoplasmoides gallisepticum (strain R(low / passage 15 / clone 2)) (Mycoplasma gallisepticum).